We begin with the raw amino-acid sequence, 301 residues long: N-acetylmuramic acid 6-phosphate etherase (301 aa).

Residues 57–220 (IAEAFRQGGR…TTGAMIRTGK (164 aa)) form the SIS domain. Glu-85 (proton donor) is an active-site residue. Residue Glu-116 is part of the active site.

The protein belongs to the GCKR-like family. MurNAc-6-P etherase subfamily. Homodimer.

The catalysed reaction is N-acetyl-D-muramate 6-phosphate + H2O = N-acetyl-D-glucosamine 6-phosphate + (R)-lactate. Its pathway is amino-sugar metabolism; 1,6-anhydro-N-acetylmuramate degradation. It participates in amino-sugar metabolism; N-acetylmuramate degradation. It functions in the pathway cell wall biogenesis; peptidoglycan recycling. Functionally, specifically catalyzes the cleavage of the D-lactyl ether substituent of MurNAc 6-phosphate, producing GlcNAc 6-phosphate and D-lactate. Together with AnmK, is also required for the utilization of anhydro-N-acetylmuramic acid (anhMurNAc) either imported from the medium or derived from its own cell wall murein, and thus plays a role in cell wall recycling. This is N-acetylmuramic acid 6-phosphate etherase from Photorhabdus laumondii subsp. laumondii (strain DSM 15139 / CIP 105565 / TT01) (Photorhabdus luminescens subsp. laumondii).